Here is a 464-residue protein sequence, read N- to C-terminus: Bifunctional protein GlmU (464 aa).

The pyrophosphorylase stretch occupies residues 1 to 232 (MKHDELAAVI…ADEAMGINDR (232 aa)). Residues 11–14 (LAAG), lysine 25, glutamine 76, and 81–82 (GT) contribute to the UDP-N-acetyl-alpha-D-glucosamine site. Residue aspartate 106 participates in Mg(2+) binding. The UDP-N-acetyl-alpha-D-glucosamine site is built by glycine 143, glutamate 157, asparagine 172, and asparagine 230. Asparagine 230 provides a ligand contact to Mg(2+). The interval 233-253 (VQLAQASALMRRRINENLMRA) is linker. An N-acetyltransferase region spans residues 254 to 464 (GVSFIDPEQT…RHDPKCKNKD (211 aa)). Residues arginine 336 and lysine 354 each coordinate UDP-N-acetyl-alpha-D-glucosamine. Histidine 366 functions as the Proton acceptor in the catalytic mechanism. 2 residues coordinate UDP-N-acetyl-alpha-D-glucosamine: tyrosine 369 and asparagine 380. Acetyl-CoA-binding positions include 389–390 (NY), serine 408, alanine 426, and arginine 443.

This sequence in the N-terminal section; belongs to the N-acetylglucosamine-1-phosphate uridyltransferase family. The protein in the C-terminal section; belongs to the transferase hexapeptide repeat family. As to quaternary structure, homotrimer. Mg(2+) serves as cofactor.

The protein localises to the cytoplasm. It catalyses the reaction alpha-D-glucosamine 1-phosphate + acetyl-CoA = N-acetyl-alpha-D-glucosamine 1-phosphate + CoA + H(+). The catalysed reaction is N-acetyl-alpha-D-glucosamine 1-phosphate + UTP + H(+) = UDP-N-acetyl-alpha-D-glucosamine + diphosphate. It functions in the pathway nucleotide-sugar biosynthesis; UDP-N-acetyl-alpha-D-glucosamine biosynthesis; N-acetyl-alpha-D-glucosamine 1-phosphate from alpha-D-glucosamine 6-phosphate (route II): step 2/2. The protein operates within nucleotide-sugar biosynthesis; UDP-N-acetyl-alpha-D-glucosamine biosynthesis; UDP-N-acetyl-alpha-D-glucosamine from N-acetyl-alpha-D-glucosamine 1-phosphate: step 1/1. Its pathway is bacterial outer membrane biogenesis; LPS lipid A biosynthesis. Functionally, catalyzes the last two sequential reactions in the de novo biosynthetic pathway for UDP-N-acetylglucosamine (UDP-GlcNAc). The C-terminal domain catalyzes the transfer of acetyl group from acetyl coenzyme A to glucosamine-1-phosphate (GlcN-1-P) to produce N-acetylglucosamine-1-phosphate (GlcNAc-1-P), which is converted into UDP-GlcNAc by the transfer of uridine 5-monophosphate (from uridine 5-triphosphate), a reaction catalyzed by the N-terminal domain. This is Bifunctional protein GlmU from Syntrophotalea carbinolica (strain DSM 2380 / NBRC 103641 / GraBd1) (Pelobacter carbinolicus).